Reading from the N-terminus, the 92-residue chain is Defensin-like protein 226 (92 aa).

A signal peptide spans 1–27 (MKCGVLFMISCLLITFLVLSHVREVES). 4 disulfide bridges follow: Cys-33–Cys-92, Cys-43–Cys-71, Cys-51–Cys-86, and Cys-69–Cys-88.

This sequence belongs to the DEFL family.

It localises to the secreted. The sequence is that of Defensin-like protein 226 (SCRL2) from Arabidopsis thaliana (Mouse-ear cress).